A 216-amino-acid polypeptide reads, in one-letter code: Small ribosomal subunit protein uS3 (216 aa).

Residues 39-111 (IYKFFDKLVR…DINLQVSLLK (73 aa)) enclose the KH type-2 domain.

It belongs to the universal ribosomal protein uS3 family. As to quaternary structure, part of the 30S ribosomal subunit. Forms a tight complex with proteins S10 and S14.

In terms of biological role, binds the lower part of the 30S subunit head. Binds mRNA in the 70S ribosome, positioning it for translation. In Mycoplasmopsis agalactiae (strain NCTC 10123 / CIP 59.7 / PG2) (Mycoplasma agalactiae), this protein is Small ribosomal subunit protein uS3.